Reading from the N-terminus, the 182-residue chain is Large ribosomal subunit protein uL5 (182 aa).

Belongs to the universal ribosomal protein uL5 family. As to quaternary structure, part of the 50S ribosomal subunit; part of the 5S rRNA/L5/L18/L25 subcomplex. Contacts the 5S rRNA and the P site tRNA. Forms a bridge to the 30S subunit in the 70S ribosome.

This is one of the proteins that bind and probably mediate the attachment of the 5S RNA into the large ribosomal subunit, where it forms part of the central protuberance. In the 70S ribosome it contacts protein S13 of the 30S subunit (bridge B1b), connecting the 2 subunits; this bridge is implicated in subunit movement. Contacts the P site tRNA; the 5S rRNA and some of its associated proteins might help stabilize positioning of ribosome-bound tRNAs. In Coxiella burnetii (strain CbuG_Q212) (Coxiella burnetii (strain Q212)), this protein is Large ribosomal subunit protein uL5.